A 630-amino-acid chain; its full sequence is Plastin-3 (630 aa).

EF-hand domains lie at 12–47 (DELDELKEAFAKVDLNSNGFICDYELHELFKEANMP) and 52–87 (KVREIIQKLMLDGDRNKDGKISFDEFVYIFQEVKSS). Ca(2+)-binding residues include Asp-25, Asn-27, Asn-29, Glu-36, Asp-65, Asn-67, Asp-69, Lys-71, and Glu-76. 2 actin-binding regions span residues 109–382 (TSEL…ALTK) and 383–627 (PENQ…GRGM). 2 consecutive Calponin-homology (CH) domains span residues 123-239 (EEEK…KIGL) and 267-378 (LSPE…NKYP). Phosphoserine is present on residues Ser-268, Ser-293, Ser-326, and Ser-339. Thr-391 carries the post-translational modification Phosphothreonine. 2 consecutive Calponin-homology (CH) domains span residues 397–506 (TREE…RRYT) and 518–627 (KAND…GRGM).

As to quaternary structure, monomer. Expressed in a variety of organs, including muscle, brain, uterus and esophagus.

It is found in the cytoplasm. Functionally, actin-bundling protein. In Homo sapiens (Human), this protein is Plastin-3 (PLS3).